The chain runs to 61 residues: Small ribosomal subunit protein uS14 (61 aa).

C24, C27, C40, and C43 together coordinate Zn(2+).

The protein belongs to the universal ribosomal protein uS14 family. Zinc-binding uS14 subfamily. As to quaternary structure, part of the 30S ribosomal subunit. Contacts proteins S3 and S10. It depends on Zn(2+) as a cofactor.

In terms of biological role, binds 16S rRNA, required for the assembly of 30S particles and may also be responsible for determining the conformation of the 16S rRNA at the A site. The protein is Small ribosomal subunit protein uS14 of Streptococcus thermophilus (strain ATCC BAA-491 / LMD-9).